A 551-amino-acid chain; its full sequence is Solute carrier family 22 member 27 (551 aa).

At 1 to 15 the chain is on the cytoplasmic side; that stretch reads MSFQELLNQVGSLGR. The helical transmembrane segment at 16-36 threads the bilayer; the sequence is FQILQIVFLLLLNAIVVPHIA. At 37 to 145 the chain is on the extracellular side; sequence MENFTAAIPN…DLVCESQALN (109 aa). 5 N-linked (GlcNAc...) asparagine glycosylation sites follow: N39, N56, N62, N102, and N107. The helical transmembrane segment at 146 to 166 threads the bilayer; that stretch reads SVTKFSFMIGLFIGGIICGHL. At 167–173 the chain is on the cytoplasmic side; that stretch reads SDRLGRK. A helical membrane pass occupies residues 174–194; sequence FILTCALLQFAITETCVAFAP. The Extracellular portion of the chain corresponds to 195 to 203; sequence SFFIYCSLR. Residues 204–224 form a helical membrane-spanning segment; sequence FLAGLSVEPILVNSHLLMLEW. Topologically, residues 225-234 are cytoplasmic; that stretch reads TSPKFLTMMA. Residues 235 to 255 traverse the membrane as a helical segment; sequence ALLSCAPNIGYMISAGLAFLF. Over 256–258 the chain is Extracellular; that stretch reads RIW. A helical transmembrane segment spans residues 259–279; sequence HHLQLTMSVPIFFFLILTRWL. Residues 280 to 348 are Cytoplasmic-facing; sequence SESARWLIVT…LFHTSILRKR (69 aa). The chain crosses the membrane as a helical span at residues 349–369; it reads ICVLSFMRLFFTVSIFGLAVH. The Extracellular portion of the chain corresponds to 370-376; it reads LQHLSSN. The helical transmembrane segment at 377-397 threads the bilayer; that stretch reads IILLQFLISALAILVSVIGPF. Residues 398-405 lie on the Cytoplasmic side of the membrane; that stretch reads VLNHIGRR. A helical transmembrane segment spans residues 406–426; sequence ITYLVLMSLRGIFILIAVFVP. Residues 427-432 are Extracellular-facing; that stretch reads QEMQTL. A helical transmembrane segment spans residues 433–453; the sequence is RIIMATLAEGISSLCVGVSRL. Topologically, residues 454-467 are cytoplasmic; that stretch reads HTNELLPTTLRATA. The helical transmembrane segment at 468–488 threads the bilayer; sequence VGVIGFFGNSGSFLSPLFMLL. Topologically, residues 489 to 494 are extracellular; sequence ATYYAN. A helical membrane pass occupies residues 495–515; sequence MPWIFYGGFSIFNAFTVFLLP. Over 516–551 the chain is Cytoplasmic; that stretch reads ETKNQPLPDSTHDVGNDWKESRKGKKEDPIIKVTRF. Residues 523 to 551 are disordered; it reads PDSTHDVGNDWKESRKGKKEDPIIKVTRF. Residues 525 to 545 show a composition bias toward basic and acidic residues; sequence STHDVGNDWKESRKGKKEDPI.

Belongs to the major facilitator (TC 2.A.1) superfamily. Organic cation transporter (TC 2.A.1.19) family. As to expression, expressed in proximal kidney tubules, and in liver hepatocytes (at protein level).

The protein resides in the cell membrane. Functionally, does not appear to have transporter activity. Sodium-independent organic anion transporter which exhibits high specificity for L-carnitine. Can also transport salicylic acid and the drug cimetidine. The protein is Solute carrier family 22 member 27 of Mus musculus (Mouse).